Here is a 132-residue protein sequence, read N- to C-terminus: Small ribosomal subunit protein uS8 (132 aa).

Belongs to the universal ribosomal protein uS8 family. Part of the 30S ribosomal subunit. Contacts proteins S5 and S12.

Functionally, one of the primary rRNA binding proteins, it binds directly to 16S rRNA central domain where it helps coordinate assembly of the platform of the 30S subunit. The protein is Small ribosomal subunit protein uS8 of Lactobacillus acidophilus (strain ATCC 700396 / NCK56 / N2 / NCFM).